Consider the following 283-residue polypeptide: Polyamine aminopropyltransferase (283 aa).

The 234-residue stretch at 5–238 (QTWIDEYHKG…GIWSWTFASS (234 aa)) folds into the PABS domain. Gln-32 contacts S-methyl-5'-thioadenosine. Spermidine-binding residues include His-63 and Asp-87. S-methyl-5'-thioadenosine is bound by residues Glu-107 and 139–140 (DG). The active-site Proton acceptor is the Asp-158. Residue 158–161 (DCSD) coordinates spermidine.

It belongs to the spermidine/spermine synthase family. Homodimer or homotetramer.

The protein localises to the cytoplasm. The catalysed reaction is S-adenosyl 3-(methylsulfanyl)propylamine + putrescine = S-methyl-5'-thioadenosine + spermidine + H(+). The protein operates within amine and polyamine biosynthesis; spermidine biosynthesis; spermidine from putrescine: step 1/1. Its function is as follows. Catalyzes the irreversible transfer of a propylamine group from the amino donor S-adenosylmethioninamine (decarboxy-AdoMet) to putrescine (1,4-diaminobutane) to yield spermidine. This Prochlorococcus marinus (strain MIT 9301) protein is Polyamine aminopropyltransferase.